A 503-amino-acid chain; its full sequence is ATP synthase subunit alpha (503 aa).

170-177 contacts ATP; sequence GDRKTGKT.

The protein belongs to the ATPase alpha/beta chains family. In terms of assembly, F-type ATPases have 2 components, CF(1) - the catalytic core - and CF(0) - the membrane proton channel. CF(1) has five subunits: alpha(3), beta(3), gamma(1), delta(1), epsilon(1). CF(0) has four main subunits: a, b, b' and c.

It is found in the cellular thylakoid membrane. It carries out the reaction ATP + H2O + 4 H(+)(in) = ADP + phosphate + 5 H(+)(out). Functionally, produces ATP from ADP in the presence of a proton gradient across the membrane. The alpha chain is a regulatory subunit. The sequence is that of ATP synthase subunit alpha from Gloeothece citriformis (strain PCC 7424) (Cyanothece sp. (strain PCC 7424)).